Reading from the N-terminus, the 366-residue chain is tRNA pseudouridine synthase B (366 aa).

A disordered region spans residues 1–55; sequence MTVTTPDALLAPHDVQHAGADESAAQIRKPRDNNDPRNANRGGGNGKPRRDKRDV. Asp-92 functions as the Nucleophile in the catalytic mechanism.

Belongs to the pseudouridine synthase TruB family. Type 1 subfamily.

The catalysed reaction is uridine(55) in tRNA = pseudouridine(55) in tRNA. In terms of biological role, responsible for synthesis of pseudouridine from uracil-55 in the psi GC loop of transfer RNAs. The protein is tRNA pseudouridine synthase B of Rhodopseudomonas palustris (strain ATCC BAA-98 / CGA009).